The sequence spans 233 residues: Coenzyme Q-binding protein COQ10 homolog, mitochondrial (233 aa).

Residues 1-34 (MAEKATSLFLRAMEISEKQSFDVMRRNSSCTIRH) constitute a mitochondrion transit peptide.

Belongs to the COQ10 family. In terms of assembly, interacts with coenzyme Q.

The protein localises to the mitochondrion inner membrane. Required for the function of coenzyme Q in the respiratory chain. May serve as a chaperone or may be involved in the transport of Q6 from its site of synthesis to the catalytic sites of the respiratory complexes. This Danio rerio (Zebrafish) protein is Coenzyme Q-binding protein COQ10 homolog, mitochondrial.